The primary structure comprises 225 residues: ATP-dependent dethiobiotin synthetase BioD (225 aa).

15 to 20 (EIGKTF) is a binding site for ATP. Threonine 19 provides a ligand contact to Mg(2+). Residue lysine 40 is part of the active site. ATP is bound by residues aspartate 57, 118-121 (EGVG), 178-179 (NR), and 207-209 (PHV). 2 residues coordinate Mg(2+): aspartate 57 and glutamate 118.

Belongs to the dethiobiotin synthetase family. In terms of assembly, homodimer. Mg(2+) serves as cofactor.

The protein resides in the cytoplasm. It carries out the reaction (7R,8S)-7,8-diammoniononanoate + CO2 + ATP = (4R,5S)-dethiobiotin + ADP + phosphate + 3 H(+). It functions in the pathway cofactor biosynthesis; biotin biosynthesis; biotin from 7,8-diaminononanoate: step 1/2. Catalyzes a mechanistically unusual reaction, the ATP-dependent insertion of CO2 between the N7 and N8 nitrogen atoms of 7,8-diaminopelargonic acid (DAPA, also called 7,8-diammoniononanoate) to form a ureido ring. This chain is ATP-dependent dethiobiotin synthetase BioD, found in Aromatoleum aromaticum (strain DSM 19018 / LMG 30748 / EbN1) (Azoarcus sp. (strain EbN1)).